The sequence spans 545 residues: E3 ubiquitin-protein ligase ipaH9.8 (545 aa).

The interaction with target proteins stretch occupies residues 1–242 (MLPINNNFSL…YHGPRIYFSM (242 aa)). LRR repeat units follow at residues 57-77 (NSDELRLDRLNLSSLPDNLPA), 78-99 (QITLLNVSYNQLTNLPELPVTL), 100-117 (KKLYSASNKLSELPVLPP), 118-139 (ALESLQVQHNELENLPALPDSL), 140-157 (LTMNISYNEIVSLPSLPQ), 158-179 (ALKNLRATRNFLTELPAFSEGN), 182-203 (VVREYFFDRNQISHIPESILNL), and 205-228 (NECSIHISDNPLSSHALPALQRLT). A linker region spans residues 243–250 (SDGQQNTL). The E3 ubiquitin-protein ligase catalytic domain stretch occupies residues 251–545 (HRPLADAVTA…PENGSQLHHS (295 aa)). Residues 253 to 545 (PLADAVTAWF…PENGSQLHHS (293 aa)) form the NEL domain. Cys-337 (glycyl thioester intermediate) is an active-site residue.

It belongs to the LRR-containing bacterial E3 ligase family. Also interacts with human and mouse U2AF1 (U2AF35). Post-translationally, autoubiquitinated (in vitro). Ubiquitinated in the presence of host E1 ubiquitin-activating enzyme, E2 ubiquitin-conjugating enzyme and ubiquitin.

Its subcellular location is the secreted. The protein resides in the host cytoplasm. It localises to the host nucleus. The catalysed reaction is S-ubiquitinyl-[E2 ubiquitin-conjugating enzyme]-L-cysteine + [acceptor protein]-L-lysine = [E2 ubiquitin-conjugating enzyme]-L-cysteine + N(6)-ubiquitinyl-[acceptor protein]-L-lysine.. Its pathway is protein modification; protein ubiquitination. With respect to regulation, exists in an autoinhibited state in the absence of substrate protein, due to interactions of the leucine-rich repeats with NEL domain. Is activated upon binding to a substrate protein. Effector E3 ubiquitin ligase that interferes with host's ubiquitination pathway and modulates the acute inflammatory responses, thus facilitating bacterial colonization within the host cell. Interacts with IKBKG (NEMO) and TNIP1 (ABIN-1), a ubiquitin-binding adapter protein, which results in TNIP1-dependent 'Lys-27'-linked polyubiquitination of IKBKG. Consequently, polyubiquitinated IKBKG undergoes proteasome-dependent degradation, which perturbs NF-kappa-B activation during bacterial infection. Mediates polyubiquitination of host U2AF1, leading to its proteasomal degradation. Catalyzes 'Lys-48'-linked polyubiquitination and subsequent degradation of a subset of host guanylate-binding proteins (GBP1, GBP2, GBP4 and GBP6), thereby suppressing host cell defense. In contrast, host GBP3 and GBP7 are not ubiquitinated by IpaH9.8. Uses UBE2D2 (UBCH5B) as an E2 ubiquitin-conjugating enzyme. In Shigella flexneri, this protein is E3 ubiquitin-protein ligase ipaH9.8.